The sequence spans 458 residues: NADH-quinone oxidoreductase subunit N (458 aa).

A run of 14 helical transmembrane segments spans residues 2–22 (LLLL…CFAL), 30–50 (IIYN…FKYS), 71–91 (IILL…ILVG), 93–113 (TLKF…FVAI), 118–138 (FLLL…LAGF), 153–173 (FILG…IYGF), 196–216 (LIIG…SSPL), 235–255 (FTAA…KLII), 261–281 (INYN…AFGA), 290–310 (LMAY…LLHN), 319–339 (LYIL…IMLF), 361–381 (IAAL…LTGF), 397–417 (FTLA…YLKV), and 438–458 (LLLI…IILF).

Belongs to the complex I subunit 2 family. As to quaternary structure, NDH-1 is composed of 14 different subunits. Subunits NuoA, H, J, K, L, M, N constitute the membrane sector of the complex.

The protein resides in the cell inner membrane. The enzyme catalyses a quinone + NADH + 5 H(+)(in) = a quinol + NAD(+) + 4 H(+)(out). Functionally, NDH-1 shuttles electrons from NADH, via FMN and iron-sulfur (Fe-S) centers, to quinones in the respiratory chain. The immediate electron acceptor for the enzyme in this species is believed to be ubiquinone. Couples the redox reaction to proton translocation (for every two electrons transferred, four hydrogen ions are translocated across the cytoplasmic membrane), and thus conserves the redox energy in a proton gradient. The protein is NADH-quinone oxidoreductase subunit N of Rickettsia prowazekii (strain Madrid E).